We begin with the raw amino-acid sequence, 227 residues long: Probable septum site-determining protein MinC (227 aa).

The protein belongs to the MinC family. As to quaternary structure, interacts with MinD and FtsZ.

In terms of biological role, cell division inhibitor that blocks the formation of polar Z ring septums. Rapidly oscillates between the poles of the cell to destabilize FtsZ filaments that have formed before they mature into polar Z rings. Prevents FtsZ polymerization. This Geobacillus kaustophilus (strain HTA426) protein is Probable septum site-determining protein MinC.